The sequence spans 336 residues: Glycerol-3-phosphate dehydrogenase [NAD(P)+] (336 aa).

Ser-14, Trp-15, Arg-35, Arg-36, and Lys-109 together coordinate NADPH. The sn-glycerol 3-phosphate site is built by Lys-109 and Gly-139. Ala-143 serves as a coordination point for NADPH. Sn-glycerol 3-phosphate-binding residues include Lys-194, Asp-247, Ser-257, Arg-258, and Asn-259. Lys-194 functions as the Proton acceptor in the catalytic mechanism. Arg-258 lines the NADPH pocket. Glu-284 lines the NADPH pocket.

The protein belongs to the NAD-dependent glycerol-3-phosphate dehydrogenase family.

It is found in the cytoplasm. The enzyme catalyses sn-glycerol 3-phosphate + NAD(+) = dihydroxyacetone phosphate + NADH + H(+). It catalyses the reaction sn-glycerol 3-phosphate + NADP(+) = dihydroxyacetone phosphate + NADPH + H(+). The protein operates within membrane lipid metabolism; glycerophospholipid metabolism. Functionally, catalyzes the reduction of the glycolytic intermediate dihydroxyacetone phosphate (DHAP) to sn-glycerol 3-phosphate (G3P), the key precursor for phospholipid synthesis. In Streptomyces griseus subsp. griseus (strain JCM 4626 / CBS 651.72 / NBRC 13350 / KCC S-0626 / ISP 5235), this protein is Glycerol-3-phosphate dehydrogenase [NAD(P)+].